The primary structure comprises 546 residues: Arginine--tRNA ligase (546 aa).

The 'HIGH' region signature appears at 117–127 (ANPTGPLHIGR).

Belongs to the class-I aminoacyl-tRNA synthetase family.

Its subcellular location is the cytoplasm. It catalyses the reaction tRNA(Arg) + L-arginine + ATP = L-arginyl-tRNA(Arg) + AMP + diphosphate. This chain is Arginine--tRNA ligase, found in Thermoplasma acidophilum (strain ATCC 25905 / DSM 1728 / JCM 9062 / NBRC 15155 / AMRC-C165).